The chain runs to 316 residues: Carbamate kinase-like protein YahI (316 aa).

The protein belongs to the carbamate kinase family.

This chain is Carbamate kinase-like protein YahI (yahI), found in Escherichia coli (strain K12).